Reading from the N-terminus, the 857-residue chain is Alanine--tRNA ligase (857 aa).

Zn(2+)-binding residues include His-556, His-560, Cys-658, and His-662.

This sequence belongs to the class-II aminoacyl-tRNA synthetase family. Zn(2+) serves as cofactor.

Its subcellular location is the cytoplasm. The enzyme catalyses tRNA(Ala) + L-alanine + ATP = L-alanyl-tRNA(Ala) + AMP + diphosphate. Catalyzes the attachment of alanine to tRNA(Ala) in a two-step reaction: alanine is first activated by ATP to form Ala-AMP and then transferred to the acceptor end of tRNA(Ala). Also edits incorrectly charged Ser-tRNA(Ala) and Gly-tRNA(Ala) via its editing domain. In Sulfurovum sp. (strain NBC37-1), this protein is Alanine--tRNA ligase.